A 456-amino-acid chain; its full sequence is UDP-glycosyltransferase 84B1 (456 aa).

Residues serine 278, 332 to 334 (SPQ), 349 to 357 (HCGWNSTME), and 371 to 374 (WTDQ) contribute to the UDP-alpha-D-glucose site.

This sequence belongs to the UDP-glycosyltransferase family.

Possesses low quercetin 7-O-glucosyltransferase activity in vitro. The sequence is that of UDP-glycosyltransferase 84B1 (UGT84B1) from Arabidopsis thaliana (Mouse-ear cress).